We begin with the raw amino-acid sequence, 158 residues long: Acetolactate synthase small subunit (158 aa).

In terms of domain architecture, ACT spans 4–79; it reads MIIAKLHNVT…DVIEVADITD (76 aa).

Belongs to the acetolactate synthase small subunit family. In terms of assembly, dimer of large and small chains.

It catalyses the reaction 2 pyruvate + H(+) = (2S)-2-acetolactate + CO2. It participates in amino-acid biosynthesis; L-isoleucine biosynthesis; L-isoleucine from 2-oxobutanoate: step 1/4. Its pathway is amino-acid biosynthesis; L-valine biosynthesis; L-valine from pyruvate: step 1/4. This is Acetolactate synthase small subunit (ilvH) from Lactococcus lactis subsp. lactis (strain IL1403) (Streptococcus lactis).